We begin with the raw amino-acid sequence, 795 residues long: RINT1-like protein MAG2 (795 aa).

The stretch at 35 to 64 (TGLVSELQTEISELDQRLAGLNRQLESGLA) forms a coiled coil. The segment at 91–111 (TSVTRSASDSGKEEEATEHVA) is disordered. Over residues 100 to 111 (SGKEEEATEHVA) the composition is skewed to basic and acidic residues. The RINT1/TIP20 domain occupies 207–795 (ALAMMRPQAI…KKVAKSRVFS (589 aa)).

The protein belongs to the RINT1 family. Interacts with SEC20 and SYP81. Interacts with ZW10 (via the central region). Forms a complex with ZW10/MIP1, MIP2 and MIP3 on the endoplasmic reticulum. As to expression, highly expressed in dry seeds. Expressed at low levels in roots, rosette and cauline leaves, stems and flowers.

It is found in the endoplasmic reticulum membrane. Functionally, functions in the anterograde transport of storage protein precursors from the endoplasmic reticulum (ER) to the Golgi complex and in the retrograde transport from the Golgi complex to the ER. Forms a complex with ZW10/MIP1, MIP2 and MIP3 on the ER that may be responsible for efficient transport of seed storage proteins. Required for the responses to environmental stresses during seed germination and vegetative growth. Probably not involved in the retrograde transport from the ER to the apoplast. In Arabidopsis thaliana (Mouse-ear cress), this protein is RINT1-like protein MAG2.